A 397-amino-acid chain; its full sequence is Acetate kinase (397 aa).

Position 8 (Asn-8) interacts with Mg(2+). Lys-15 contacts ATP. Arg-92 contributes to the substrate binding site. Asp-149 serves as the catalytic Proton donor/acceptor. ATP is bound by residues 209–213 (HLGNG), 283–285 (DFR), and 331–335 (GVGEN). Glu-385 lines the Mg(2+) pocket.

It belongs to the acetokinase family. Homodimer. It depends on Mg(2+) as a cofactor. Mn(2+) serves as cofactor.

It localises to the cytoplasm. It carries out the reaction acetate + ATP = acetyl phosphate + ADP. It participates in metabolic intermediate biosynthesis; acetyl-CoA biosynthesis; acetyl-CoA from acetate: step 1/2. Functionally, catalyzes the formation of acetyl phosphate from acetate and ATP. Can also catalyze the reverse reaction. The sequence is that of Acetate kinase from Corynebacterium glutamicum (strain R).